We begin with the raw amino-acid sequence, 524 residues long: Alanine aminotransferase 2 (524 aa).

Lysine 342 is subject to N6-(pyridoxal phosphate)lysine.

Belongs to the class-I pyridoxal-phosphate-dependent aminotransferase family. Alanine aminotransferase subfamily. Homodimer. Pyridoxal 5'-phosphate is required as a cofactor.

The enzyme catalyses L-alanine + 2-oxoglutarate = pyruvate + L-glutamate. It functions in the pathway amino-acid degradation; L-alanine degradation via transaminase pathway; pyruvate from L-alanine: step 1/1. In terms of biological role, catalyzes the reversible transamination between alanine and 2-oxoglutarate to form pyruvate and glutamate. This Xenopus tropicalis (Western clawed frog) protein is Alanine aminotransferase 2 (gpt2).